We begin with the raw amino-acid sequence, 326 residues long: Light-induced protein, chloroplastic (326 aa).

Residues 1–63 (MASISSLNQI…TNPKPKFTAQ (63 aa)) constitute a chloroplast transit peptide.

It belongs to the LIPC family. In terms of assembly, associates with the major light-harvesting antenna complex polypeptides of the PSII oxygen-evolving complex. As to expression, expressed in leaves.

The protein localises to the plastid. It localises to the chloroplast thylakoid membrane. Its function is as follows. Required for normal plant growth. May be both photoprotective and play an ancillary role in photosynthesis. May structurally stabilize thylakoids during osmotic and oxidative stress. This chain is Light-induced protein, chloroplastic, found in Solanum tuberosum (Potato).